A 500-amino-acid polypeptide reads, in one-letter code: Serine carboxypeptidase 3 (500 aa).

Residues 1 to 21 (MATARVSLILLVVVLAASACA) form the signal peptide. Residues 22–73 (EGLRLPRDAKFPAAQAERLIRSLNLLPKEAGPTGAGDVPSVAPGELLERRVT) constitute a propeptide that is removed on maturation. 3 cysteine pairs are disulfide-bonded: C126-C366, C294-C309, and C332-C337. N-linked (GlcNAc...) asparagine glycosylation is present at N144. The active site involves S216. Residue D404 is part of the active site. C407 serves as a coordination point for substrate. H461 is a catalytic residue. A propeptide spanning residues 485–500 (EEWLAELPEQPMYAAM) is cleaved from the precursor.

This sequence belongs to the peptidase S10 family. As to quaternary structure, monomer.

The catalysed reaction is Release of a C-terminal amino acid with broad specificity.. The chain is Serine carboxypeptidase 3 (CBP3) from Oryza sativa subsp. japonica (Rice).